The sequence spans 396 residues: NADH-quinone oxidoreductase subunit D 1 (396 aa).

This sequence belongs to the complex I 49 kDa subunit family. As to quaternary structure, NDH-1 is composed of 14 different subunits. Subunits NuoB, C, D, E, F, and G constitute the peripheral sector of the complex.

It is found in the cell inner membrane. It catalyses the reaction a quinone + NADH + 5 H(+)(in) = a quinol + NAD(+) + 4 H(+)(out). NDH-1 shuttles electrons from NADH, via FMN and iron-sulfur (Fe-S) centers, to quinones in the respiratory chain. The immediate electron acceptor for the enzyme in this species is believed to be ubiquinone. Couples the redox reaction to proton translocation (for every two electrons transferred, four hydrogen ions are translocated across the cytoplasmic membrane), and thus conserves the redox energy in a proton gradient. This chain is NADH-quinone oxidoreductase subunit D 1, found in Rhizobium etli (strain CIAT 652).